The primary structure comprises 373 residues: tRNA-specific 2-thiouridylase MnmA (373 aa).

ATP contacts are provided by residues 12–19 and Met38; that span reads GMSGGVDS. An interaction with target base in tRNA region spans residues 98 to 100; the sequence is NPD. Cys103 functions as the Nucleophile in the catalytic mechanism. Cys103 and Cys200 are oxidised to a cystine. Gly127 contacts ATP. The interval 150–152 is interaction with tRNA; sequence KDQ. Cys200 (cysteine persulfide intermediate) is an active-site residue. The interval 312–313 is interaction with tRNA; the sequence is RY.

This sequence belongs to the MnmA/TRMU family.

The protein localises to the cytoplasm. The enzyme catalyses S-sulfanyl-L-cysteinyl-[protein] + uridine(34) in tRNA + AH2 + ATP = 2-thiouridine(34) in tRNA + L-cysteinyl-[protein] + A + AMP + diphosphate + H(+). Its function is as follows. Catalyzes the 2-thiolation of uridine at the wobble position (U34) of tRNA, leading to the formation of s(2)U34. This is tRNA-specific 2-thiouridylase MnmA from Streptococcus pneumoniae (strain ATCC BAA-255 / R6).